The sequence spans 92 residues: Small ribosomal subunit protein uS19 (92 aa).

The protein belongs to the universal ribosomal protein uS19 family.

Protein S19 forms a complex with S13 that binds strongly to the 16S ribosomal RNA. This chain is Small ribosomal subunit protein uS19, found in Allorhizobium ampelinum (strain ATCC BAA-846 / DSM 112012 / S4) (Agrobacterium vitis (strain S4)).